Consider the following 267-residue polypeptide: Ribosyldihydronicotinamide dehydrogenase-like protein traD (267 aa).

FAD is bound by residues His-9, 15-16 (LN), and 100-103 (LWWF). Residue 122–124 (GHG) coordinates substrate. Residues 152 to 155 (TLGG) and Tyr-160 each bind FAD.

It belongs to the NAD(P)H dehydrogenase (quinone) family. As to quaternary structure, homodimer. FAD is required as a cofactor.

It functions in the pathway secondary metabolite biosynthesis. Functionally, ribosyldihydronicotinamide dehydrogenase-like protein; part of the tra gene cluster that produces terrestric acid. The clavatol biosynthesis cluster cla and the terrestric acid cluster tra are both involved in the production of peniphenones and penilactones. The non-reducing PKS claF is responsible for the formation of clavatol from successive condensations of 3 malonyl-CoA units, presumably with a simple acetyl-CoA starter unit, and 2 methylation steps. The esterase claE probably collaborates with claF by catalyzing the hydrolysis of ACP-bound acyl intermediates to free the ACP from stalled intermediates. The clavatol oxidase claD then converts clavatol to hydroxyclavatol. Spontaneous dehydration of hydroxyclavatol leads to the accumulation of the highly active ortho-quinone methide. On the other hand, the PKS-NRPS hybrid traA is involved in the formation of crustosic acid, with the help of traB and traD. The polyketide synthase module (PKS) of traA is responsible for the synthesis of the polyketide backbone via the condensation of an acetyl-CoA starter unit with 3 malonyl-CoA units. The downstream nonribosomal peptide synthetase (NRPS) module then amidates the carboxyl end of the polyketide with L-malic acid. Because traA lacks a designated enoylreductase (ER) domain, the required activity is provided the enoyl reductase traG. Crustosic acid undergoes decarboxylation and isomerization to the terrestric acid, catalyzed by the 2-oxoglutarate-dependent dioxygenase traH. Both acids are further converted to the 2 gamma-butyrolactones (R)-5-methyltetronic acid and (S)-5-carboxylmethyltetronic acid, with involvement of the cytochrome P450 monooxygenase claJ. Spontaneous addition of the methide to these gamma-butyrolactones leads to peniphenone D and penilactone D, which undergo again stereospecific attacking by methide to give penilactones A and B. In Penicillium crustosum (Blue mold fungus), this protein is Ribosyldihydronicotinamide dehydrogenase-like protein traD.